Consider the following 239-residue polypeptide: Ribonuclease HII (239 aa).

Positions 30–221 constitute an RNase H type-2 domain; it reads GPVAGVDEVG…VRRVATRSNG (192 aa). The a divalent metal cation site is built by D36, E37, and D130. The tract at residues 219-239 is disordered; sequence SNGAAAAEREADPPQERDGTG. Residues 225–239 are compositionally biased toward basic and acidic residues; it reads AEREADPPQERDGTG.

The protein belongs to the RNase HII family. Mn(2+) serves as cofactor. The cofactor is Mg(2+).

The protein localises to the cytoplasm. The catalysed reaction is Endonucleolytic cleavage to 5'-phosphomonoester.. Its function is as follows. Endonuclease that specifically degrades the RNA of RNA-DNA hybrids. This chain is Ribonuclease HII, found in Mycobacterium marinum (strain ATCC BAA-535 / M).